A 266-amino-acid chain; its full sequence is Gasdermin bGSDM (266 aa).

Cysteine 4 carries the S-palmitoyl cysteine lipid modification. 4 beta stranded membrane passes run 69–85 (INGQ…GINI), 97–114 (AGIE…FEFS), 163–180 (EFTV…QLDV), and 189–205 (GKLK…TVTY). The segment at 238–266 (AMALDAAGGVMPSDSALLDEGGLLDLEGF) is C-terminal region.

Belongs to the bacterial gasdermin family. In terms of assembly, monomer in solution. Homooligomer; forms homooligomeric ring-shaped pores when inserted in membranes with 48-54 subunits per ring. Palmitoylation helps stabilize the inactive state; may self palmitoylate. Palmitoylation plays a significant role in pore formation.

It localises to the cytoplasm. Its subcellular location is the cell inner membrane. Its activity is regulated as follows. The full-length protein before cleavage is inactive: intramolecular interactions between the N-terminal domain and the C-terminal region as well as the lipid modification, mediate autoinhibition. The pyroptosis-like-inducing activity is carried by the released N-terminal domain (Gasdermin bGSDM, N-terminus). Precursor of a pore-forming protein involved in defense against bacteriophages. Expression of bGSDM and the neighboring protease gene (Ga0334635_1659) is toxic in E.coli. Cleavage of this precursor by its dedicated protease releases the active moiety (gasdermin bGSDM, N-terminus) which inserts into membranes, forming pores and triggering cell death. Its function is as follows. Pore-forming protein that causes membrane permeabilization, probably via a pyroptosis-like activity. Makes ring-like pores with an interior pore diameter of 200-300 Angstroms, when integrated in liposomes. The chain is Gasdermin bGSDM from Vitiosangium sp. (strain GDMCC 1.1324).